Here is a 119-residue protein sequence, read N- to C-terminus: Phenol 2-monooxygenase, oxygenase component DmpO (119 aa).

As to quaternary structure, the multicomponent enzyme phenol hydroxylase is formed by DmpL (P1 component), DmpM (P2 component), DmpN (P3 component), DmpO (P4 component) and DmpP (P5 component). The oxygenase component is a dimer composed of three subunits, DmpL, DmpN and DmpO (DmpLNO).

The enzyme catalyses phenol + NADH + O2 + H(+) = catechol + NAD(+) + H2O. Its pathway is aromatic compound metabolism; phenol degradation. Requires DmpM for efficient turnover. The activity of DmpLNO oxygenase is inhibited by dithiothreitol (DTT) by a mechanism apparently involving H(2)O(2) generation. In terms of biological role, part of a multicomponent enzyme which catalyzes the degradation of phenol and some of its methylated derivatives. DmpL, DmpN and DmpO form the oxygenase component of the complex. Required for growth on phenol and for in vitro phenol hydroxylase activity. The chain is Phenol 2-monooxygenase, oxygenase component DmpO from Pseudomonas sp. (strain CF600).